The primary structure comprises 150 residues: UPF0756 membrane protein HDEF_0364 (150 aa).

The next 5 helical transmembrane spans lie at 1 to 21 (MMFF…GLIS), 28 to 48 (ISVV…FPWV), 51 to 71 (YALK…IASG), 88 to 108 (ILGI…VSLM), and 123 to 143 (ILGV…AGLL).

It belongs to the UPF0756 family.

It is found in the cell membrane. The protein is UPF0756 membrane protein HDEF_0364 of Hamiltonella defensa subsp. Acyrthosiphon pisum (strain 5AT).